A 481-amino-acid chain; its full sequence is GDP-fucose protein O-fucosyltransferase 3 (481 aa).

Residues 1-8 (MVRFQRRK) lie on the Cytoplasmic side of the membrane. A helical; Signal-anchor for type II membrane protein transmembrane segment spans residues 9–31 (LLASCLCVTATVFLMVTLQVVVE). Topologically, residues 32–481 (LGKFERKKLK…EEFWALVFKD (450 aa)) are lumenal. N-linked (GlcNAc...) asparagine glycosylation is found at N110, N168, and N318. Cysteines 389 and 392 form a disulfide. N468 carries N-linked (GlcNAc...) asparagine glycosylation.

It belongs to the glycosyltransferase 10 family. Widely expressed, with a higher expression in liver and thymus.

The protein resides in the endoplasmic reticulum membrane. The enzyme catalyses L-threonyl-[protein] + GDP-beta-L-fucose = 3-O-(alpha-L-fucosyl)-L-threonyl-[protein] + GDP + H(+). The catalysed reaction is L-seryl-[protein] + GDP-beta-L-fucose = 3-O-(alpha-L-fucosyl)-L-seryl-[protein] + GDP + H(+). It participates in protein modification; protein glycosylation. Its function is as follows. Protein O-fucosyltransferase that specifically catalyzes O-fucosylation of serine or threonine residues in EMI domains of target proteins, such as MMRN1, MMRN2 and EMID1. Attaches fucose through an O-glycosidic linkage. O-fucosylation of EMI domain-containing proteins may be required for facilitating protein folding and secretion. May also show alpha-(1,3)-fucosyltransferase activity toward the innermost N-acetyl glucosamine (GlcNAc) residue in biantennary N-glycan acceptors. However, this was tested with a library of synthetic substrates and this activity is unsure in vivo. May be involved in biosynthesis of Lewis X-carrying biantennary N-glycans that regulate neuron stem cell self-renewal during brain development. In Mus musculus (Mouse), this protein is GDP-fucose protein O-fucosyltransferase 3.